The primary structure comprises 453 residues: UDP-N-acetylmuramate--L-alanine ligase (453 aa).

ATP is bound at residue 112-118 (GTHGKTT).

It belongs to the MurCDEF family.

It is found in the cytoplasm. It carries out the reaction UDP-N-acetyl-alpha-D-muramate + L-alanine + ATP = UDP-N-acetyl-alpha-D-muramoyl-L-alanine + ADP + phosphate + H(+). It functions in the pathway cell wall biogenesis; peptidoglycan biosynthesis. Cell wall formation. The polypeptide is UDP-N-acetylmuramate--L-alanine ligase (Bdellovibrio bacteriovorus (strain ATCC 15356 / DSM 50701 / NCIMB 9529 / HD100)).